The primary structure comprises 264 residues: THAP domain-containing protein 10 (264 aa).

Residues 1–90 (MPARCVAAHC…LVAGAVPTLH (90 aa)) form a THAP-type zinc finger. 2 disordered regions span residues 90-136 (HRVP…PRAG) and 160-195 (TQPHADNPSNTVTSVPTHCEEGPVHKSTQISLKRPR). Positions 99–122 (GGEEGDQAGRPDTRGELQAARHSE) are enriched in basic and acidic residues. The span at 160–175 (TQPHADNPSNTVTSVP) shows a compositional bias: polar residues.

The sequence is that of THAP domain-containing protein 10 (THAP10) from Pongo abelii (Sumatran orangutan).